We begin with the raw amino-acid sequence, 458 residues long: uncharacterized protein (458 aa).

12 helical membrane-spanning segments follow: residues 26 to 46 (LIAI…KSIH), 47 to 67 (FAGP…FLIM), 95 to 115 (AAFI…MADL), 125 to 145 (WLPG…LLIM), 160 to 180 (FALI…VMIF), 208 to 228 (GFIL…LVGL), 251 to 271 (VLLF…WDII), 278 to 298 (FVQV…NFVV), 342 to 362 (ALFF…IMPE), 365 to 385 (FTLI…ITVI), 409 to 429 (PFTN…LALA), and 432 to 452 (TRVS…IYKV).

This sequence belongs to the amino acid-polyamine-organocation (APC) superfamily.

The protein localises to the cell membrane. In terms of biological role, probable amino-acid or metabolite transport protein. This is an uncharacterized protein from Bacillus subtilis (strain 168).